Reading from the N-terminus, the 476-residue chain is H2.0-like homeobox protein (476 aa).

Disordered regions lie at residues 120–169 (QHLP…PSSK), 328–401 (WRHS…HQTT), and 413–476 (TASS…LAGL). Composition is skewed to low complexity over residues 123–134 (PQQSPTQQQQPQ) and 158–168 (HHSGSAPAPSS). Residues 273–332 (RSWSRAVFSNLQRKGLEKRFEIQKYVTKPDRKQLAAMLGLTDAQVKVWFQNRRMKWRHSK) constitute a DNA-binding region (homeobox). Composition is skewed to basic and acidic residues over residues 331–346 (SKEA…EAGE) and 355–368 (EGER…RSEG). Residues 369–379 (EAESESSDSES) show a composition bias toward acidic residues. The span at 386 to 397 (DTERTEGTERSL) shows a compositional bias: basic and acidic residues. Over residues 413 to 434 (TASSSTSGSSFSFSSTSSLGSG) the composition is skewed to low complexity. Polar residues-rich tracts occupy residues 435–446 (NTHVGSASSLGG) and 455–467 (HQPS…QSPE).

Belongs to the H2.0 homeobox family. In terms of tissue distribution, expressed in Th1 cells, CD8-positive T-cells, B-cells and NK cells.

It is found in the nucleus. In terms of biological role, transcription factor required for TBX21/T-bet-dependent maturation of Th1 cells as well as maintenance of Th1-specific gene expression. Involved in embryogenesis and hematopoiesis. The protein is H2.0-like homeobox protein (Hlx) of Mus musculus (Mouse).